The primary structure comprises 322 residues: Undecaprenyl-phosphate 4-deoxy-4-formamido-L-arabinose transferase (322 aa).

At 1–235 (MFEIHPVKKV…TCLTTTPLRM (235 aa)) the chain is on the cytoplasmic side. The helical transmembrane segment at 236–256 (LSLLGSIIAIGGFSIAVLLVI) threads the bilayer. The Periplasmic segment spans residues 257 to 269 (LRLTFGPQWAAEG). Residues 270–290 (VFMLFAVLFTFIGAQFIGMGL) traverse the membrane as a helical segment. Topologically, residues 291 to 322 (LGEYIGRIYTDVRARPRYFVQQVIRPSSKENE) are cytoplasmic.

The protein belongs to the glycosyltransferase 2 family.

The protein resides in the cell inner membrane. It carries out the reaction UDP-4-deoxy-4-formamido-beta-L-arabinose + di-trans,octa-cis-undecaprenyl phosphate = 4-deoxy-4-formamido-alpha-L-arabinopyranosyl di-trans,octa-cis-undecaprenyl phosphate + UDP. It participates in glycolipid biosynthesis; 4-amino-4-deoxy-alpha-L-arabinose undecaprenyl phosphate biosynthesis; 4-amino-4-deoxy-alpha-L-arabinose undecaprenyl phosphate from UDP-4-deoxy-4-formamido-beta-L-arabinose and undecaprenyl phosphate: step 1/2. The protein operates within bacterial outer membrane biogenesis; lipopolysaccharide biosynthesis. In terms of biological role, catalyzes the transfer of 4-deoxy-4-formamido-L-arabinose from UDP to undecaprenyl phosphate. The modified arabinose is attached to lipid A and is required for resistance to polymyxin and cationic antimicrobial peptides. The polypeptide is Undecaprenyl-phosphate 4-deoxy-4-formamido-L-arabinose transferase (Escherichia coli O45:K1 (strain S88 / ExPEC)).